The sequence spans 383 residues: Sphingosine kinase 1 (383 aa).

In terms of domain architecture, DAGKc spans 12–159 (PRPCRVLVLL…MNLLSLHTAS (148 aa)). Residues 22 to 24 (NPR) and 54 to 58 (TERQN) each bind ATP. 79–82 (SGDG) contributes to the substrate binding site. Catalysis depends on aspartate 81, which acts as the Proton donor/acceptor. ATP contacts are provided by residues glutamate 86 and 111-113 (GSG). Short sequence motifs (nuclear export signal) lie at residues 147–155 (LSPMNLLSL) and 161–169 (RQLYSVLSL). Residue aspartate 178 participates in substrate binding. Arginine 185 and arginine 191 together coordinate ATP. Residue threonine 193 is modified to Phosphothreonine. Phosphoserine is present on serine 225. 340–342 (DGE) contacts ATP. The segment at 363 to 383 (GSSDSPSGRDSQRRPPPEEPI) is disordered. Positions 372 to 383 (DSQRRPPPEEPI) are enriched in basic and acidic residues.

As to quaternary structure, interacts with ACY1. Binds to calmodulin. Interacts with SPHKAP. Interacts with CIB1, the interaction occurs in a calcium-dependent manner. Interacts with TRAF2. Interacts with EEF1A1; the interaction enhances SPHK1 kinase activity. Mg(2+) is required as a cofactor. Expressed in microglia (at protein level).

The protein resides in the cytoplasm. The protein localises to the nucleus. Its subcellular location is the cell membrane. It is found in the endosome membrane. It localises to the membrane. The protein resides in the clathrin-coated pit. The protein localises to the synapse. It catalyses the reaction a sphingoid base + ATP = a sphingoid 1-phosphate + ADP + H(+). It carries out the reaction L-seryl-[protein] + acetyl-CoA = O-acetyl-L-seryl-[protein] + CoA. The enzyme catalyses sphinganine + ATP = sphinganine 1-phosphate + ADP + H(+). The catalysed reaction is sphing-4-enine + ATP = sphing-4-enine 1-phosphate + ADP + H(+). It catalyses the reaction 1-O-hexadecyl-2-amino-sn-glycerol + ATP = 1-O-hexadecyl-2-desoxy-2-amino-sn-glycero-3-phosphate + ADP + H(+). Acetyltransferase activity increases in presence of the kinase substrate, sphingosine. In Purkinje cells, kinase activity on sphingosine increases in presence of VEGFA. In neurons, kinase activity increases during the first 24h in presence of Amyloid-beta protein 42 to decrease after 96h. Catalyzes the phosphorylation of sphingosine to form sphingosine 1-phosphate (SPP), a lipid mediator with both intra- and extracellular functions. Also acts on D-erythro-sphingosine and to a lesser extent sphinganine, but not other lipids, such as D,L-threo-dihydrosphingosine, N,N-dimethylsphingosine, diacylglycerol, ceramide, or phosphatidylinositol. In contrast to proapoptotic SPHK2, has a negative effect on intracellular ceramide levels, enhances cell growth and inhibits apoptosis. Involved in the regulation of inflammatory response and neuroinflammation. Via the product sphingosine 1-phosphate, stimulates TRAF2 E3 ubiquitin ligase activity, and promotes activation of NF-kappa-B in response to TNF signaling leading to IL17 secretion. In response to TNF and in parallel to NF-kappa-B activation, negatively regulates RANTES induction through p38 MAPK signaling pathway. Involved in endocytic membrane trafficking induced by sphingosine, recruited to dilate endosomes, also plays a role on later stages of endosomal maturation and membrane fusion independently of its kinase activity. In Purkinje cells, seems to be also involved in the regulation of autophagosome-lysosome fusion upon VEGFA. Its function is as follows. Has serine acetyltransferase activity on PTGS2/COX2 in an acetyl-CoA dependent manner. The acetyltransferase activity increases in presence of the kinase substrate, sphingosine. During neuroinflammation, through PTGS2 acetylation, promotes neuronal secretion of specialized preresolving mediators (SPMs), especially 15-R-lipoxin A4, which results in an increase of phagocytic microglia. This is Sphingosine kinase 1 (Sphk1) from Rattus norvegicus (Rat).